The chain runs to 63 residues: Large ribosomal subunit protein uL29 (63 aa).

It belongs to the universal ribosomal protein uL29 family.

The protein is Large ribosomal subunit protein uL29 of Bdellovibrio bacteriovorus (strain ATCC 15356 / DSM 50701 / NCIMB 9529 / HD100).